The primary structure comprises 150 residues: MLRTMFTGKIHRATVTQADLHYVGSVTVDQDLLDAAGILPGELVAVVDVTNGARLETYTIAGERGSGVLGINGAAAHLVHPGDLVILIAYGLMDTAEAQTYEPRVVHVDERNRIVALGSDPADAVVGDVVRPPHAREHGRAREDAATTRA.

Ser-25 acts as the Schiff-base intermediate with substrate; via pyruvic acid in catalysis. Ser-25 is subject to Pyruvic acid (Ser). Residue Thr-57 participates in substrate binding. Catalysis depends on Tyr-58, which acts as the Proton donor. Position 73–75 (73–75) interacts with substrate; that stretch reads GAA.

It belongs to the PanD family. Heterooctamer of four alpha and four beta subunits. Requires pyruvate as cofactor. Is synthesized initially as an inactive proenzyme, which is activated by self-cleavage at a specific serine bond to produce a beta-subunit with a hydroxyl group at its C-terminus and an alpha-subunit with a pyruvoyl group at its N-terminus.

The protein resides in the cytoplasm. The enzyme catalyses L-aspartate + H(+) = beta-alanine + CO2. The protein operates within cofactor biosynthesis; (R)-pantothenate biosynthesis; beta-alanine from L-aspartate: step 1/1. In terms of biological role, catalyzes the pyruvoyl-dependent decarboxylation of aspartate to produce beta-alanine. In Kocuria rhizophila (strain ATCC 9341 / DSM 348 / NBRC 103217 / DC2201), this protein is Aspartate 1-decarboxylase.